The chain runs to 570 residues: Putative diflavin flavoprotein A 5 (570 aa).

Residues 38–231 (ERGTTSNSYV…LQVRLYAVGH (194 aa)) form a zinc metallo-hydrolase region. Residues 260-402 (VALLYASAYG…VGTDFAQTLK (143 aa)) form the Flavodoxin-like domain. The tract at residues 421-570 (VGRIVGSVCV…INHRKTGNHY (150 aa)) is flavodoxin-reductase-like.

The protein in the N-terminal section; belongs to the zinc metallo-hydrolase group 3 family. In the C-terminal section; belongs to the flavodoxin reductase family. Fe cation serves as cofactor.

Mediates electron transfer from NADH to oxygen, reducing it to water. This modular protein has 3 redox cofactors, in other organisms the same activity requires 2 or 3 proteins. The protein is Putative diflavin flavoprotein A 5 (dfa5) of Nostoc sp. (strain PCC 7120 / SAG 25.82 / UTEX 2576).